The primary structure comprises 131 residues: Leptin receptor gene-related protein (131 aa).

Helical transmembrane passes span 7-27 (LVAL…GCAL), 32-52 (VYWP…HFIA), 69-89 (LAYF…VILA), and 100-120 (GLVL…FLIF).

Belongs to the OB-RGRP/VPS55 family. In terms of assembly, interacts with LEPR. Interacts with RAB13. As to expression, expressed at the highest levels in heart and placenta and at a lesser extent in lung, liver, skeletal muscle, kidney and pancreas.

Its subcellular location is the golgi apparatus membrane. It is found in the endosome membrane. In terms of biological role, negatively regulates leptin receptor (LEPR) cell surface expression, and thus decreases response to leptin. Negatively regulates growth hormone (GH) receptor cell surface expression in liver. May play a role in liver resistance to GH during periods of reduced nutrient availability. The chain is Leptin receptor gene-related protein (LEPROT) from Homo sapiens (Human).